Consider the following 244-residue polypeptide: Phosphoadenosine 5'-phosphosulfate reductase (244 aa).

Catalysis depends on cysteine 239, which acts as the Nucleophile; cysteine thiosulfonate intermediate.

The protein belongs to the PAPS reductase family. CysH subfamily.

The protein localises to the cytoplasm. It carries out the reaction [thioredoxin]-disulfide + sulfite + adenosine 3',5'-bisphosphate + 2 H(+) = [thioredoxin]-dithiol + 3'-phosphoadenylyl sulfate. It participates in sulfur metabolism; hydrogen sulfide biosynthesis; sulfite from sulfate: step 3/3. In terms of biological role, catalyzes the formation of sulfite from phosphoadenosine 5'-phosphosulfate (PAPS) using thioredoxin as an electron donor. The protein is Phosphoadenosine 5'-phosphosulfate reductase of Klebsiella pneumoniae subsp. pneumoniae (strain ATCC 700721 / MGH 78578).